Here is a 159-residue protein sequence, read N- to C-terminus: Endoribonuclease YbeY (159 aa).

The Zn(2+) site is built by His-114, His-118, and His-124.

This sequence belongs to the endoribonuclease YbeY family. Zn(2+) is required as a cofactor.

The protein localises to the cytoplasm. Its function is as follows. Single strand-specific metallo-endoribonuclease involved in late-stage 70S ribosome quality control and in maturation of the 3' terminus of the 16S rRNA. The polypeptide is Endoribonuclease YbeY (Pectobacterium atrosepticum (strain SCRI 1043 / ATCC BAA-672) (Erwinia carotovora subsp. atroseptica)).